The primary structure comprises 259 residues: Phosphoadenosine 5'-phosphosulfate reductase (259 aa).

The active-site Nucleophile; cysteine thiosulfonate intermediate is cysteine 244.

This sequence belongs to the PAPS reductase family. CysH subfamily.

The protein resides in the cytoplasm. It carries out the reaction [thioredoxin]-disulfide + sulfite + adenosine 3',5'-bisphosphate + 2 H(+) = [thioredoxin]-dithiol + 3'-phosphoadenylyl sulfate. Its pathway is sulfur metabolism; hydrogen sulfide biosynthesis; sulfite from sulfate: step 3/3. Functionally, catalyzes the formation of sulfite from phosphoadenosine 5'-phosphosulfate (PAPS) using thioredoxin as an electron donor. The protein is Phosphoadenosine 5'-phosphosulfate reductase of Vibrio parahaemolyticus serotype O3:K6 (strain RIMD 2210633).